A 294-amino-acid chain; its full sequence is HTH-type transcriptional regulator TcbR (294 aa).

The 58-residue stretch at 1–58 (MEFRQLKYFIAVAEAGNMAAAAKRLHVSQPPITRQMQALEADLGVVLLERSHRGIELT) folds into the HTH lysR-type domain. A DNA-binding region (H-T-H motif) is located at residues 18 to 37 (MAAAAKRLHVSQPPITRQMQ).

This sequence belongs to the LysR transcriptional regulatory family.

In terms of biological role, involved in regulation of chlorinated catechol metabolism. Transcriptional activator of the tcbCDEF chlorocatechol oxidative operon. May bind 2-chloromuconate as an inducer. The chain is HTH-type transcriptional regulator TcbR (tcbR) from Pseudomonas sp. (strain P51).